The primary structure comprises 727 residues: Calpain-like protease 1 (727 aa).

In terms of domain architecture, Calpain catalytic spans 70 to 317 (SRFYPPIPIS…FKQLYLNWNQ (248 aa)). Active-site residues include C128, H271, and N296.

This sequence belongs to the peptidase C2 family. PalB/RIM13 subfamily. As to quaternary structure, interacts with SNF7, which may act together with RIM20 as a scaffold to recruit RIM13 to its substrate RIM101.

Functionally, required for the proteolytic cleavage of the transcriptional repressor RIM101 in response to alkaline ambient pH, which is necessary for sporulation and invasive growth. Probably the protease that cleaves RIM101. This Saccharomyces cerevisiae (strain ATCC 204508 / S288c) (Baker's yeast) protein is Calpain-like protease 1 (RIM13).